Here is a 196-residue protein sequence, read N- to C-terminus: Beta-crystallin A4 (196 aa).

At threonine 2 the chain carries N-acetylthreonine. Residues 2 to 11 (TLQCTKSAGH) are N-terminal arm. Beta/gamma crystallin 'Greek key' domains follow at residues 12–51 (WRMV…KVLS) and 52–98 (GAWV…RPVA). Positions 99–104 (CANHRD) are connecting peptide. 2 consecutive Beta/gamma crystallin 'Greek key' domains span residues 105–146 (SRLT…HVQS) and 147–195 (GAWV…RRIQ).

This sequence belongs to the beta/gamma-crystallin family. As to quaternary structure, homo/heterodimer, or complexes of higher-order. The structure of beta-crystallin oligomers seems to be stabilized through interactions between the N-terminal arms.

In terms of biological role, crystallins are the dominant structural components of the vertebrate eye lens. The sequence is that of Beta-crystallin A4 (Cryba4) from Mus musculus (Mouse).